Consider the following 173-residue polypeptide: Globin, cuticular isoform (173 aa).

A signal peptide spans 1 to 16 (MLWFVAVCFAIASVSA). The Globin domain occupies 17–166 (MSPADVKKHT…FNSEAQHQLE (150 aa)). Heme b is bound at residue His113.

It belongs to the globin family. As to expression, expressed only by adult nematodes in the gut.

It is found in the secreted. The protein resides in the extracellular space. The chain is Globin, cuticular isoform (GLBC) from Nippostrongylus brasiliensis (Rat hookworm).